The primary structure comprises 484 residues: Adenylosuccinate lyase (484 aa).

Ala2 is modified (N-acetylalanine). Residues 20–21 (RY), 85–87 (RHD), and 111–112 (TS) contribute to the substrate site. N6-acetyllysine is present on Lys147. The active-site Proton donor/acceptor is His159. Gln241 serves as a coordination point for substrate. Ser289 functions as the Proton donor/acceptor in the catalytic mechanism. N6-acetyllysine is present on Lys295. Substrate is bound by residues Arg303, Arg329, Ser334, and Arg338. Residue Lys415 forms a Glycyl lysine isopeptide (Lys-Gly) (interchain with G-Cter in SUMO1) linkage.

It belongs to the lyase 1 family. Adenylosuccinate lyase subfamily. As to quaternary structure, homotetramer. Residues from neighboring subunits contribute catalytic and substrate-binding residues to each active site.

It catalyses the reaction N(6)-(1,2-dicarboxyethyl)-AMP = fumarate + AMP. The catalysed reaction is (2S)-2-[5-amino-1-(5-phospho-beta-D-ribosyl)imidazole-4-carboxamido]succinate = 5-amino-1-(5-phospho-beta-D-ribosyl)imidazole-4-carboxamide + fumarate. The protein operates within purine metabolism; AMP biosynthesis via de novo pathway; AMP from IMP: step 2/2. It participates in purine metabolism; IMP biosynthesis via de novo pathway; 5-amino-1-(5-phospho-D-ribosyl)imidazole-4-carboxamide from 5-amino-1-(5-phospho-D-ribosyl)imidazole-4-carboxylate: step 2/2. Catalyzes two non-sequential steps in de novo AMP synthesis: converts (S)-2-(5-amino-1-(5-phospho-D-ribosyl)imidazole-4-carboxamido)succinate (SAICAR) to fumarate plus 5-amino-1-(5-phospho-D-ribosyl)imidazole-4-carboxamide, and thereby also contributes to de novo IMP synthesis, and converts succinyladenosine monophosphate (SAMP) to AMP and fumarate. This Macaca fascicularis (Crab-eating macaque) protein is Adenylosuccinate lyase (ADSL).